The primary structure comprises 273 residues: Ciliary microtubule inner protein 2B (273 aa).

Disordered stretches follow at residues 59–85 (TLLP…GHER) and 123–164 (RHGE…HASP). Basic and acidic residues predominate over residues 123 to 159 (RHGEQESHQLPDGAKGEREVEEDQLREAEEPPLKQEL).

The protein belongs to the CIMIP2 family. As to quaternary structure, microtubule inner protein component of sperm flagellar doublet microtubules. In terms of tissue distribution, expressed in airway epithelial cells.

The protein localises to the cytoplasm. It is found in the cytoskeleton. The protein resides in the cilium axoneme. It localises to the flagellum axoneme. Its function is as follows. Microtubule inner protein (MIP) part of the dynein-decorated doublet microtubules (DMTs) in cilia axoneme, which is required for motile cilia beating. This chain is Ciliary microtubule inner protein 2B (Cimip2b), found in Mus musculus (Mouse).